We begin with the raw amino-acid sequence, 22 residues long: Ocellatin-LB1 (22 aa).

At M22 the chain carries Methionine amide.

Expressed by the skin glands.

Its subcellular location is the secreted. In terms of biological role, antibacterial peptide that inhibits Gram-negative bacteria A.actinomycetemcomitans ATCC 29522 (MIC=222.37 uM) and E.coli ATCC 25922 (MIC=114.04 uM). Also has antifungal activity against C.albicans ATCC 18804 (MIC=233.55 uM) and C.lusitaniae ATCC 56936 (MIC=233.55 uM). No activity against the Gram-positive bacterium S.aureus ATCC 25923. Shows virtually no hemolytic activity towards rabbit erythrocytes. In Leptodactylus labyrinthicus (Labyrinth frog), this protein is Ocellatin-LB1.